The chain runs to 217 residues: Acyl-homoserine-lactone synthase (217 aa).

Belongs to the autoinducer synthase family.

It carries out the reaction a fatty acyl-[ACP] + S-adenosyl-L-methionine = an N-acyl-L-homoserine lactone + S-methyl-5'-thioadenosine + holo-[ACP] + H(+). In terms of biological role, required for the synthesis of OHHL (N-(3-oxohexanoyl)-L-homoserine lactone), an autoinducer molecule which binds to ExpR and thus acts in virulence (soft rot disease) through the activation of genes for plant tissue macerating enzymes. The protein is Acyl-homoserine-lactone synthase (expI) of Pectobacterium parmentieri.